Consider the following 344-residue polypeptide: Melanocyte-stimulating hormone receptor (344 aa).

The Extracellular portion of the chain corresponds to 1 to 37 (MPMQGAQRKLLGSLNSTPTATSNPGLAANHTGAPCLE). The N-linked (GlcNAc...) asparagine glycan is linked to Asn-29. The helical transmembrane segment at 38–63 (VSIPDGLFLSLGLVSLVENVLVVAAI) threads the bilayer. At 64–72 (AKNRNLHSS) the chain is on the cytoplasmic side. Residues 73-93 (MYXFICCLALSDLLVSGSNML) traverse the membrane as a helical segment. At 94-118 (ETAIILLLEAGTLATRASVVQQLHN) the chain is on the extracellular side. Residues 119–140 (TIDVLTCSSMLCSLCFLGAIAV) form a helical membrane-spanning segment. The Cytoplasmic portion of the chain corresponds to 141–163 (DRYISIFYALRYHSIMTLPRAQR). The helical transmembrane segment at 164-183 (AIAAIWVASVLSSTLFITYY) threads the bilayer. Over 184–191 (DHAAVLLC) the chain is Extracellular. A helical transmembrane segment spans residues 192 to 211 (LVVFFLAMLVLMAVLYVHML). Residues 212–240 (ARACQHAQGIIRLHNRQLPAHKGFGLRGA) lie on the Cytoplasmic side of the membrane. Residues 241–266 (ATLTILLGIFFLCWGPFFLHLTLVVF) traverse the membrane as a helical segment. The Extracellular portion of the chain corresponds to 267–279 (CPQHLTCNCIFKN). A helical membrane pass occupies residues 280–300 (FKVFLTLIICNTIIDPLIYAF). At 301–344 (RSQELRRTLKEVLLCSSWPGCWAEGGGDSVWPGSCVTLRGPLPP) the chain is on the cytoplasmic side. Cys-315 carries S-palmitoyl cysteine lipidation.

Belongs to the G-protein coupled receptor 1 family. Interacts with MGRN1, but does not undergo MGRN1-mediated ubiquitination; this interaction competes with GNAS-binding and thus inhibits agonist-induced cAMP production. Interacts with OPN3; the interaction results in a decrease in MC1R-mediated cAMP signaling and ultimately a decrease in melanin production in melanocytes.

Its subcellular location is the cell membrane. Functionally, receptor for MSH (alpha, beta and gamma) and ACTH. The activity of this receptor is mediated by G proteins which activate adenylate cyclase. Mediates melanogenesis, the production of eumelanin (black/brown) and phaeomelanin (red/yellow), via regulation of cAMP signaling in melanocytes. The sequence is that of Melanocyte-stimulating hormone receptor (MC1R) from Callithrix geoffroyi (Geoffroy's marmoset).